The sequence spans 406 residues: uncharacterized protein (406 aa).

This sequence belongs to the glycosyltransferase group 1 family. Glycosyltransferase 4 subfamily.

This is an uncharacterized protein from Methanocaldococcus jannaschii (strain ATCC 43067 / DSM 2661 / JAL-1 / JCM 10045 / NBRC 100440) (Methanococcus jannaschii).